Consider the following 412-residue polypeptide: Propionate kinase (412 aa).

This sequence belongs to the acetokinase family. PduW subfamily.

It localises to the cytoplasm. It carries out the reaction propanoate + ATP = propanoyl phosphate + ADP. Its pathway is polyol metabolism; 1,2-propanediol degradation. In terms of biological role, works with phosphate acetyltransferase (pta) to capture exogenous propionate and regenerate propionyl-CoA during degradation of 1,2-propanediol (1,2-PD). The chain is Propionate kinase from Yersinia enterocolitica serotype O:8 / biotype 1B (strain NCTC 13174 / 8081).